The following is a 219-amino-acid chain: Proteasome subunit beta type-9 (219 aa).

Residues M1–G20 constitute a propeptide, removed in mature form. The active-site Nucleophile is the T21. An N6-acetyllysine mark is found at K53 and K109.

This sequence belongs to the peptidase T1B family. As to quaternary structure, the 26S proteasome consists of a 20S proteasome core and two 19S regulatory subunits. The 20S proteasome core is composed of 28 subunits that are arranged in four stacked rings, resulting in a barrel-shaped structure. The two end rings are each formed by seven alpha subunits, and the two central rings are each formed by seven beta subunits. The catalytic chamber with the active sites is on the inside of the barrel. Component of the immunoproteasome, where it displaces the equivalent housekeeping subunit PSMB6. Component of the spermatoproteasome, a form of the proteasome specifically found in testis. Autocleaved. The resulting N-terminal Thr residue of the mature subunit is responsible for the nucleophile proteolytic activity.

The protein resides in the cytoplasm. Its subcellular location is the nucleus. It carries out the reaction Cleavage of peptide bonds with very broad specificity.. In terms of biological role, the proteasome is a multicatalytic proteinase complex which is characterized by its ability to cleave peptides with Arg, Phe, Tyr, Leu, and Glu adjacent to the leaving group at neutral or slightly basic pH. The proteasome has an ATP-dependent proteolytic activity. This subunit is involved in antigen processing to generate class I binding peptides. The sequence is that of Proteasome subunit beta type-9 (PSMB9) from Bos taurus (Bovine).